The primary structure comprises 213 residues: MTFPSLSVSFLFFAFIFVTHAFDLSIIQMQQGTCPYTVVVMTSCLSPESTRDQISIVFGDADGNKVYAPKLGGLVRGPGGLGKCSTNTFQVRGQCLNDPICSLYINRNGPDGWVPESIEIYSEGSKSVKFDFSKSVPQLNTWYGHNNCNTTGRPSSPDLPPPHFPPEFPPETPTTPPPPPPRPSAASRLGNGESVFLAFAIATAIAAMVRWSY.

The signal sequence occupies residues 1-21 (MTFPSLSVSFLFFAFIFVTHA). One can recognise a PLAT domain in the interval 34 to 148 (CPYTVVVMTS…LNTWYGHNNC (115 aa)). Residues 147–188 (NCNTTGRPSSPDLPPPHFPPEFPPETPTTPPPPPPRPSAASR) are disordered. N149 carries an N-linked (GlcNAc...) asparagine glycan. Over residues 157-183 (PDLPPPHFPPEFPPETPTTPPPPPPRP) the composition is skewed to pro residues.

Expressed in seeds. Expression is restricted to the developing embryo.

The protein localises to the secreted. Its function is as follows. May play a role during embryo development. This Arabidopsis thaliana (Mouse-ear cress) protein is Embryo-specific protein ATS3.